The following is a 301-amino-acid chain: tRNA-cytidine(32) 2-sulfurtransferase (301 aa).

The short motif at 47–52 (SGGKDS) is the PP-loop motif element. 3 residues coordinate [4Fe-4S] cluster: Cys-122, Cys-125, and Cys-213.

The protein belongs to the TtcA family. Homodimer. Requires Mg(2+) as cofactor. [4Fe-4S] cluster is required as a cofactor.

Its subcellular location is the cytoplasm. It catalyses the reaction cytidine(32) in tRNA + S-sulfanyl-L-cysteinyl-[cysteine desulfurase] + AH2 + ATP = 2-thiocytidine(32) in tRNA + L-cysteinyl-[cysteine desulfurase] + A + AMP + diphosphate + H(+). It participates in tRNA modification. Catalyzes the ATP-dependent 2-thiolation of cytidine in position 32 of tRNA, to form 2-thiocytidine (s(2)C32). The sulfur atoms are provided by the cysteine/cysteine desulfurase (IscS) system. The sequence is that of tRNA-cytidine(32) 2-sulfurtransferase from Photobacterium profundum (strain SS9).